A 575-amino-acid polypeptide reads, in one-letter code: Lysine--tRNA ligase (575 aa).

Residues glutamate 412 and glutamate 419 each coordinate Mg(2+).

It belongs to the class-II aminoacyl-tRNA synthetase family. In terms of assembly, homodimer. Mg(2+) serves as cofactor.

It localises to the cytoplasm. It catalyses the reaction tRNA(Lys) + L-lysine + ATP = L-lysyl-tRNA(Lys) + AMP + diphosphate. This chain is Lysine--tRNA ligase, found in Bacteroides fragilis (strain ATCC 25285 / DSM 2151 / CCUG 4856 / JCM 11019 / LMG 10263 / NCTC 9343 / Onslow / VPI 2553 / EN-2).